Here is an 88-residue protein sequence, read N- to C-terminus: UPF0250 protein Sbal_3280 (88 aa).

The protein belongs to the UPF0250 family.

This is UPF0250 protein Sbal_3280 from Shewanella baltica (strain OS155 / ATCC BAA-1091).